Consider the following 618-residue polypeptide: UvrABC system protein C (618 aa).

A GIY-YIG domain is found at 20-98 (TAPGVYRMYA…IKSLSPRYNV (79 aa)). Positions 207–242 (DQLGEEIMHSMQQASEALEFERAARLRDLLSSLRSM) constitute a UVR domain.

The protein belongs to the UvrC family. Interacts with UvrB in an incision complex.

It localises to the cytoplasm. The UvrABC repair system catalyzes the recognition and processing of DNA lesions. UvrC both incises the 5' and 3' sides of the lesion. The N-terminal half is responsible for the 3' incision and the C-terminal half is responsible for the 5' incision. In Xanthomonas campestris pv. campestris (strain B100), this protein is UvrABC system protein C.